A 95-amino-acid chain; its full sequence is Aspartyl/glutamyl-tRNA(Asn/Gln) amidotransferase subunit C (95 aa).

This sequence belongs to the GatC family. As to quaternary structure, heterotrimer of A, B and C subunits.

It carries out the reaction L-glutamyl-tRNA(Gln) + L-glutamine + ATP + H2O = L-glutaminyl-tRNA(Gln) + L-glutamate + ADP + phosphate + H(+). It catalyses the reaction L-aspartyl-tRNA(Asn) + L-glutamine + ATP + H2O = L-asparaginyl-tRNA(Asn) + L-glutamate + ADP + phosphate + 2 H(+). Allows the formation of correctly charged Asn-tRNA(Asn) or Gln-tRNA(Gln) through the transamidation of misacylated Asp-tRNA(Asn) or Glu-tRNA(Gln) in organisms which lack either or both of asparaginyl-tRNA or glutaminyl-tRNA synthetases. The reaction takes place in the presence of glutamine and ATP through an activated phospho-Asp-tRNA(Asn) or phospho-Glu-tRNA(Gln). The polypeptide is Aspartyl/glutamyl-tRNA(Asn/Gln) amidotransferase subunit C (Bradyrhizobium sp. (strain ORS 278)).